A 1246-amino-acid polypeptide reads, in one-letter code: Zinc finger protein 687a (1246 aa).

The span at 24-47 (KEAIQSDTHGNHNEHSSVVGKERS) shows a compositional bias: basic and acidic residues. Positions 24-387 (KEAIQSDTHG…PTLVESASDA (364 aa)) are disordered. 2 stretches are compositionally biased toward polar residues: residues 88 to 111 (GEFS…SSVP) and 163 to 195 (AFTN…FSSK). Low complexity predominate over residues 287–301 (SSTNPTSLTSTNNLP). The segment covering 302–317 (VEEKDLEHIIEERDSP) has biased composition (basic and acidic residues). A compositionally biased stretch (polar residues) spans 326-338 (QSRTSLPSNSQGA). Composition is skewed to basic and acidic residues over residues 341–350 (SKQRITREEA) and 360–375 (MQEK…EGKS). A C2H2-type 1 zinc finger spans residues 587-619 (YRCLECGDAFALERSLARHYDRRSMRIEVTCNH). The C2H2-type 2; degenerate zinc-finger motif lies at 696–719 (HSCPECWSTFKGKQELVAHFQEVE). 3 C2H2-type zinc fingers span residues 817 to 840 (HKCP…ASQH), 854 to 876 (YKCV…IDTH), and 885 to 908 (FKCP…KDTH). Residues 907–953 (THRETSNHDGTSTQNSLVKMESSDGEEWGRDEEEDKGKVSDANSAVP) form a disordered region. Over residues 914-923 (HDGTSTQNSL) the composition is skewed to polar residues. Over residues 929–940 (SDGEEWGRDEEE) the composition is skewed to acidic residues. 2 C2H2-type zinc fingers span residues 958–981 (WSCS…TEQH) and 988–1011 (FPCT…RVKH). The segment at 1018 to 1044 (FYCQLCTGEKRSFSSKLILEKHIQAQH) adopts a C2H2-type 8; degenerate zinc-finger fold. The tract at residues 1045–1093 (AGERGTATQSQAVPQFTDGADSSSEHDAGVLGGSSVEPESRLAESTLTR) is disordered. C2H2-type zinc fingers lie at residues 1137–1160 (AQCQ…FISH) and 1210–1232 (HICK…FRTH).

This sequence belongs to the krueppel C2H2-type zinc-finger protein family. Widely expressed with highest levels in kidney, spleen and ovary.

The protein localises to the nucleus. Functionally, may be involved in transcriptional regulation. In Danio rerio (Zebrafish), this protein is Zinc finger protein 687a (znf687a).